The chain runs to 279 residues: Small ribosomal subunit protein uS2 (279 aa).

The interval 232-260 (KVDMEAAGENAPKGAGKKKNTKARMDKAE) is disordered.

It belongs to the universal ribosomal protein uS2 family.

In Phocaeicola vulgatus (strain ATCC 8482 / DSM 1447 / JCM 5826 / CCUG 4940 / NBRC 14291 / NCTC 11154) (Bacteroides vulgatus), this protein is Small ribosomal subunit protein uS2.